Consider the following 194-residue polypeptide: PRELI domain containing protein 3B (194 aa).

Residues 1-172 form the PRELI/MSF1 domain; it reads MKIWTSEHVF…VIHKLNAEIE (172 aa). Serine 46 and serine 51 each carry phosphoserine.

It belongs to the slowmo family.

This is PRELI domain containing protein 3B (PRELID3B) from Macaca fascicularis (Crab-eating macaque).